Consider the following 240-residue polypeptide: MTLSFKPEDKLILALDGMSGAEVFMLIEKLPNLIWVKVGLELFTLLGPQIINQLRDRGKKVFLDLKFHDIPTTMGRACYQAAKTGAELITVHACAGKKGIEEANKSAVKGAKEVGLPPPSLLAVTVLTSWGSKDFVQELGIQQSLDQRVSLLANLASSAGIQGCICSPLEVMKLRKDFPEPFQLITPGIRSCGENINDQNRIMTPLEAIDAGSSKLVIGREVTSSENPSDAFNRICSQLI.

Substrate is bound by residues D16, K37, 64–73 (DLKFHDIPTT), T128, R190, Q199, G219, and R220. K66 serves as the catalytic Proton donor.

The protein belongs to the OMP decarboxylase family. Type 1 subfamily. As to quaternary structure, homodimer.

The enzyme catalyses orotidine 5'-phosphate + H(+) = UMP + CO2. It functions in the pathway pyrimidine metabolism; UMP biosynthesis via de novo pathway; UMP from orotate: step 2/2. Catalyzes the decarboxylation of orotidine 5'-monophosphate (OMP) to uridine 5'-monophosphate (UMP). The chain is Orotidine 5'-phosphate decarboxylase from Prochlorococcus marinus (strain SARG / CCMP1375 / SS120).